The following is a 309-amino-acid chain: Probable MRF1 mitochondrial N(5)-glutamine methyltransferase mtq1 (309 aa).

S-adenosyl-L-methionine is bound by residues 124–128, aspartate 148, and asparagine 200; that span reads CTGSG. 200-203 contacts substrate; that stretch reads NPPY.

Belongs to the protein N5-glutamine methyltransferase family.

Its subcellular location is the mitochondrion. It catalyses the reaction L-glutaminyl-[peptide chain release factor] + S-adenosyl-L-methionine = N(5)-methyl-L-glutaminyl-[peptide chain release factor] + S-adenosyl-L-homocysteine + H(+). Its function is as follows. Methylates MRF1 on 'Gln-270' using S-adenosyl L-methionine as methyl donor. The protein is Probable MRF1 mitochondrial N(5)-glutamine methyltransferase mtq1 (mtq1) of Schizosaccharomyces pombe (strain 972 / ATCC 24843) (Fission yeast).